The following is a 471-amino-acid chain: P2X purinoceptor 2 (471 aa).

Topologically, residues 1–42 (MAAAQPKYPAGATARRLARGCWSALWDYETPKVIVVRNRRLG) are cytoplasmic. 6 disulfides stabilise this stretch: cysteine 21-cysteine 439, cysteine 125-cysteine 176, cysteine 136-cysteine 159, cysteine 142-cysteine 170, cysteine 226-cysteine 236, and cysteine 270-cysteine 279. A helical membrane pass occupies residues 43–63 (VLYRAVQLLILLYFVWYVFIV). The Extracellular segment spans residues 64–337 (QKSYQESETG…IVHGQAGKFS (274 aa)). Residues lysine 81 and lysine 83 each contribute to the ATP site. Asparagine 133 carries N-linked (GlcNAc...) asparagine glycosylation. Asparagine 194 carries N-linked (GlcNAc...) asparagine glycosylation. Threonine 196 contributes to the ATP binding site. 3 residues coordinate ATP: serine 296, asparagine 300, and arginine 302. Residue asparagine 310 is glycosylated (N-linked (GlcNAc...) asparagine). Lysine 319 contributes to the ATP binding site. Positions 320 to 333 (AYGIRIDVIVHGQA) are pore-forming motif. A helical transmembrane segment spans residues 338-358 (LIPTIINLATALTSVGVGSFL). Residues 359–471 (CDWILLTFMN…PTDPKGLAQL (113 aa)) lie on the Cytoplasmic side of the membrane. Residues 400–471 (GQAPPEPGHR…PTDPKGLAQL (72 aa)) are disordered.

It belongs to the P2X receptor family. Homotrimer and heterotrimer; functional P2XRs are organized as homomeric and heteromeric trimers. Homotrimer. Forms heterotrimer with P2RX1. Forms heterotrimer with P2RX6. Forms heterotrimer with P2RX3. As to expression, expressed in both the central and peripheral nervous system, as well as in the pituitary gland.

Its subcellular location is the cell membrane. The catalysed reaction is Ca(2+)(in) = Ca(2+)(out). It catalyses the reaction K(+)(in) = K(+)(out). The enzyme catalyses Na(+)(in) = Na(+)(out). With respect to regulation, fast activation by external ATP. Exhibits slow desensitization during prolonged ATP activation. Not sensitive to the ATP agonist:alpha/beta-methylene-ATP. Its function is as follows. ATP-gated nonselective transmembrane cation channel permeable to potassium, sodium and calcium. Activation by extracellular ATP induces a variety of cellular responses, such as excitatory postsynaptic responses in sensory neurons, neuromuscular junctions (NMJ) formation, hearing, perception of taste and peristalsis. In the inner ear, regulates sound transduction and auditory neurotransmission, outer hair cell electromotility, inner ear gap junctions, and K(+) recycling. Mediates synaptic transmission between neurons and from neurons to smooth muscle. In Homo sapiens (Human), this protein is P2X purinoceptor 2.